Here is a 240-residue protein sequence, read N- to C-terminus: MQKQRFCIDTTAITDTEVRSSLGVDGISESTKIMLDLIADSRVNLGISCHIPYPSVYDELIGFLKRENCPKETIIKVDTWLVKKTPNRYEIKLPAELLYEYIRDIRERINKGMRIGENAMYESASVSYLSIKGCNSNQNDNTKNTKNVDTNATHKEHTDEVLSKTVKSFRNKYRTALRTGTLDSAPDLDVLLLAKELDAAVVASDEGIEKWAQRLGLRFVKAKDFPFILKEYLNTYGNKI.

This sequence belongs to the HARP family.

It carries out the reaction Endonucleolytic cleavage of RNA, removing 5'-extranucleotides from tRNA precursor.. RNA-free RNase P that catalyzes the removal of the 5'-leader sequence from pre-tRNA to produce the mature 5'-terminus. The chain is RNA-free ribonuclease P from Methanococcus aeolicus (strain ATCC BAA-1280 / DSM 17508 / OCM 812 / Nankai-3).